Here is a 385-residue protein sequence, read N- to C-terminus: FAD-dependent monooxygenase verC2 (385 aa).

FAD-binding residues include Arg27, Asp227, and Ala240. N-linked (GlcNAc...) asparagine glycosylation occurs at Asn320. A helical membrane pass occupies residues 365-385 (WKTTIMFIALLTIVVLIYSFI).

Belongs to the paxM FAD-dependent monooxygenase family. Requires FAD as cofactor.

The protein localises to the membrane. The protein operates within secondary metabolite biosynthesis; terpenoid biosynthesis. It participates in mycotoxin biosynthesis. Functionally, FAD-dependent monooxygenase; part of the gene cluster that mediates the biosynthesis of the neurotoxin verrucosidin, a methylated alpha-pyrone polyketide that inhibits oxidative phosphorylation in mitochondria and thereby causes neurological diseases. The carbon backbone of verrucosidin is synthesized by the HR-PKS verA, and further modified by the other verrucodidin cluster enzymes. The chain is FAD-dependent monooxygenase verC2 from Penicillium polonicum.